The sequence spans 261 residues: Eukaryotic translation initiation factor 3 subunit J-A (261 aa).

Over residues 1–11 the composition is skewed to low complexity; the sequence is MAAAAAAAAAA. The disordered stretch occupies residues 1 to 113; sequence MAAAAAAAAA…EPEESKVLTP (113 aa). The tract at residues 4 to 72 is sufficient for interaction with EIF3B; it reads AAAAAAAAGD…KEEAEVKPEV (69 aa). 3 positions are modified to phosphoserine: Ser14, Ser16, and Ser23. The segment covering 43–64 has biased composition (acidic residues); that stretch reads EGEDEDEDVKDNWDDDDDENKE. Basic and acidic residues predominate over residues 65–109; it reads EAEVKPEVKISEKKKIAEKIKEKERQQKKRQEEIKKRLEEPEESK. Positions 73–138 form a coiled coil; sequence KISEKKKIAE…ESDLELAKET (66 aa). Lys109 participates in a covalent cross-link: Glycyl lysine isopeptide (Lys-Gly) (interchain with G-Cter in SUMO2). Position 112 is a phosphothreonine (Thr112). At Ser130 the chain carries Phosphoserine. The tract at residues 246 to 261 is promotes stable association with the 40S ribosome; that stretch reads YGGYEGGYVQDYEDFM. Phosphotyrosine is present on Tyr257.

It belongs to the eIF-3 subunit J family. Component of the eukaryotic translation initiation factor 3 (eIF-3) complex, which is composed of 13 subunits: EIF3A, EIF3B, EIF3C, EIF3D, EIF3E, EIF3F, EIF3G, EIF3H, EIF3I, EIF3J, EIF3K, EIF3L and EIF3M. The eIF-3 complex appears to include 3 stable modules: module A is composed of EIF3A, EIF3B, EIF3G and EIF3I; module B is composed of EIF3F, EIF3H, and EIF3M; and module C is composed of EIF3C, EIF3D, EIF3E, EIF3K and EIF3L. EIF3C of module C binds EIF3B of module A and EIF3H of module B, thereby linking the three modules. EIF3J is a labile subunit that binds to the eIF-3 complex via EIF3B. The eIF-3 complex interacts with RPS6KB1 under conditions of nutrient depletion. Mitogenic stimulation leads to binding and activation of a complex composed of MTOR and RPTOR, leading to phosphorylation and release of RPS6KB1 and binding of EIF4B to eIF-3. In terms of processing, phosphorylated. Phosphorylation is enhanced upon serum stimulation.

It localises to the cytoplasm. Its function is as follows. Component of the eukaryotic translation initiation factor 3 (eIF-3) complex, which is required for several steps in the initiation of protein synthesis. The eIF-3 complex associates with the 40S ribosome and facilitates the recruitment of eIF-1, eIF-1A, eIF-2:GTP:methionyl-tRNAi and eIF-5 to form the 43S pre-initiation complex (43S PIC). The eIF-3 complex stimulates mRNA recruitment to the 43S PIC and scanning of the mRNA for AUG recognition. The eIF-3 complex is also required for disassembly and recycling of post-termination ribosomal complexes and subsequently prevents premature joining of the 40S and 60S ribosomal subunits prior to initiation. The eIF-3 complex specifically targets and initiates translation of a subset of mRNAs involved in cell proliferation, including cell cycling, differentiation and apoptosis, and uses different modes of RNA stem-loop binding to exert either translational activation or repression. This subunit binds directly within the mRNA entry channel of the 40S ribosome to the aminoacyl (A) site. It may regulate the interaction between the 43S PIC and mRNA. The chain is Eukaryotic translation initiation factor 3 subunit J-A (Eif3j1) from Mus musculus (Mouse).